A 138-amino-acid chain; its full sequence is Small ribosomal subunit protein uS11c (138 aa).

Positions 1-23 (MAKPILRIGSRKNTRSGSRKNVR) are disordered. The span at 9 to 23 (GSRKNTRSGSRKNVR) shows a compositional bias: basic residues.

The protein belongs to the universal ribosomal protein uS11 family. In terms of assembly, part of the 30S ribosomal subunit.

Its subcellular location is the plastid. The protein resides in the chloroplast. The protein is Small ribosomal subunit protein uS11c of Aethionema grandiflorum (Persian stone-cress).